Reading from the N-terminus, the 428-residue chain is MARSLCAGAWLRKPHYLQARLSYMRVKYLFFSWLVVFVGSWIIYVQYSTYTELCRGKDCKKIICDKYKTGVIDGPACNSLCVTETLYFGKCLSNKPSNQMYLGVWDNLPGVVKCQMEQALHLDFGTELEPRKEIVLFDKPTRGTTVQKFKEMVYSLFKAKLGDQGNLSELVNLILTVADGDRDGQVSLGEAKSAWALLQLNEFLLMVILQDKEHTPKLMGFCGDLYVMESVEYTSLYGISLPWVMELFIPSGFRRSMDQLFTPSWPRKAKIAIGLLEFVEDVFHGPYGNFLMCDTSAKNLGYNEKYDLKMVDMRKIVPETNLKELIKDRHCESDLDCVYGTDCRTSCDLSTMKCTSEVIQPNLAKACQLLKDYLLHGAPSEIREELEKQLYSCIALKVTANQMEMEHSLILNNLKTLLWKKISYTNDS.

The Cytoplasmic segment spans residues Met-1–Lys-27. A helical membrane pass occupies residues Tyr-28 to Ser-48. Topologically, residues Thr-49 to Ser-428 are lumenal.

The protein belongs to the DIPK family. In terms of processing, among the many cysteines in the lumenal domain, most are probably involved in disulfide bonds. Ubiquitous.

It localises to the endoplasmic reticulum membrane. This chain is Divergent protein kinase domain 1A (Dipk1a), found in Mus musculus (Mouse).